An 85-amino-acid polypeptide reads, in one-letter code: HPr-like protein Crh (85 aa).

In terms of domain architecture, HPr spans 1–85 (MVQQKVEVRL…KLAAYVQEEV (85 aa)). Phosphoserine; by HPrK/P is present on S46.

The protein belongs to the HPr family. Mixture of monomers and homodimers. Interacts with CcpA as a monomer.

Along with seryl-phosphorylated HPr, phosphorylated Crh is implicated in carbon catabolite repression (CCR) of levanase, inositol dehydrogenase, and beta-xylosidase. Exerts its effect on CCR by interacting with CcpA. This chain is HPr-like protein Crh (crh), found in Bacillus subtilis (strain 168).